A 377-amino-acid chain; its full sequence is Aspartate aminotransferase (377 aa).

Positions 37, 123, and 173 each coordinate L-aspartate. Residue lysine 234 is modified to N6-(pyridoxal phosphate)lysine. Arginine 353 is a binding site for L-aspartate.

The protein belongs to the class-I pyridoxal-phosphate-dependent aminotransferase family. Homodimer. Requires pyridoxal 5'-phosphate as cofactor.

The protein localises to the cytoplasm. The catalysed reaction is L-aspartate + 2-oxoglutarate = oxaloacetate + L-glutamate. This is Aspartate aminotransferase (aspC) from Thermotoga maritima (strain ATCC 43589 / DSM 3109 / JCM 10099 / NBRC 100826 / MSB8).